The following is a 157-amino-acid chain: Lectin (157 aa).

Cys-37 and Cys-54 are oxidised to a cystine.

As to quaternary structure, homodimer. In terms of tissue distribution, detected in fruits (at protein level).

Its subcellular location is the secreted. Its function is as follows. Binds with high affinity specifically to chito-oligosaccharides. May play a role in plant defense against pathogens by directly binding with the chitin cell wall. Forms filamentous structures at higher concentrations and may promote wound healing by forming filaments with phloem proteins like PP1. This chain is Lectin, found in Coccinia grandis (Ivy gourd).